The chain runs to 651 residues: Chaperone protein dnaK1 (651 aa).

Thr-197 carries the phosphothreonine; by autocatalysis modification.

It belongs to the heat shock protein 70 family.

Its function is as follows. Acts as a chaperone. The chain is Chaperone protein dnaK1 (dnaK1) from Thermosynechococcus vestitus (strain NIES-2133 / IAM M-273 / BP-1).